Reading from the N-terminus, the 311-residue chain is MFKFILKRIALMFPLMIVVSFMTFLLTYITNENPAVTILHAQGTPNVTPELIAETNEKYGFNDPLLIQYKNWLLEAMQFNFGTSYITGDPVAERIGPAFMNTLKLTIISSVMVMITSIILGVVSALKRGKFTDRAIRSVAFFLTALPSYWIASILIIYVSVKLNILPTSGLTGPESYILPVIVITIAYAGIYFRNVRRSMVEQLNEDYVLYLRASGVKSITLMLHVLRNALQVAVSIFCMSIPMIMGGLVVIEYIFAWPGLGQLSLKAILEHDFPVIQAYVLIVAVLFIVFNTLADIINALLNPRLREGAR.

6 helical membrane passes run 9–29 (IALMFPLMIVVSFMTFLLTYI), 105–125 (LTIISSVMVMITSIILGVVSA), 139–159 (VAFFLTALPSYWIASILIIYV), 173–193 (GPESYILPVIVITIAYAGIYF), 237–257 (IFCMSIPMIMGGLVVIEYIFA), and 274–294 (FPVIQAYVLIVAVLFIVFNTL). The region spanning 99-295 (FMNTLKLTII…VLFIVFNTLA (197 aa)) is the ABC transmembrane type-1 domain.

The protein belongs to the binding-protein-dependent transport system permease family. The complex is composed of two ATP-binding proteins (CntD and CntF), two transmembrane proteins (CntB and CntC) and a solute-binding protein (CntA).

It is found in the cell membrane. With respect to regulation, nickel/cobalt import is reduced in the presence of zinc. In terms of biological role, part of the ABC transporter complex CntABCDF (Opp1) involved in the uptake of metal in complex with the metallophore staphylopine (StP). Involved in the import of divalent metals ions such as nickel, cobalt and zinc. Probably responsible for the translocation of the substrate across the membrane. Plays a major role in nickel/cobalt import in zinc-depleted conditions. Contributes to virulence. Required for full urease activity in vitro. This chain is Metal-staphylopine import system permease protein CntB, found in Staphylococcus aureus (strain NCTC 8325 / PS 47).